Here is a 123-residue protein sequence, read N- to C-terminus: UPF0102 protein Dole_2298 (123 aa).

This sequence belongs to the UPF0102 family.

The sequence is that of UPF0102 protein Dole_2298 from Desulfosudis oleivorans (strain DSM 6200 / JCM 39069 / Hxd3) (Desulfococcus oleovorans).